A 365-amino-acid chain; its full sequence is 3-isopropylmalate dehydrogenase (365 aa).

78-89 serves as a coordination point for NAD(+); that stretch reads GPKWGTGKVRPE. Positions 96, 106, 135, and 224 each coordinate substrate. Mg(2+) is bound by residues Asp-224, Asp-249, and Asp-253. Residue 289 to 301 participates in NAD(+) binding; sequence GSAPDISGKGIVN.

This sequence belongs to the isocitrate and isopropylmalate dehydrogenases family. In terms of assembly, homodimer. Mg(2+) is required as a cofactor. Requires Mn(2+) as cofactor.

The protein localises to the cytoplasm. It carries out the reaction (2R,3S)-3-isopropylmalate + NAD(+) = 4-methyl-2-oxopentanoate + CO2 + NADH. The protein operates within amino-acid biosynthesis; L-leucine biosynthesis; L-leucine from 3-methyl-2-oxobutanoate: step 3/4. Catalyzes the oxidation of 3-carboxy-2-hydroxy-4-methylpentanoate (3-isopropylmalate) to 3-carboxy-4-methyl-2-oxopentanoate. The product decarboxylates to 4-methyl-2 oxopentanoate. The protein is 3-isopropylmalate dehydrogenase (LEUC) of Zymoseptoria tritici (Speckled leaf blotch fungus).